The sequence spans 315 residues: Protein sprouty homolog 2 (315 aa).

The span at 1–14 (MEARAQSGSGSQPL) shows a compositional bias: polar residues. Disordered stretches follow at residues 1–38 (MEAR…PQQV) and 51–140 (NTNE…GSSF). Residues 20 to 32 (DSGRQRGEPDPRD) show a composition bias toward basic and acidic residues. The segment covering 88–100 (PRQPSRPQHPPAH) has biased composition (pro residues). Residues 109-140 (RSISTVSSGSRSSTRTSTSSSSSEQRLLGSSF) show a composition bias toward low complexity. The required for interaction with CAV1 stretch occupies residues 118 to 315 (SRSSTRTSTS…VPPRNFEKPT (198 aa)). Positions 177–291 (KCEDCGKCKC…CYDRVNRPGC (115 aa)) constitute an SPR domain. The interval 178–315 (CEDCGKCKCK…VPPRNFEKPT (138 aa)) is required for interaction with TESK1.

Belongs to the sprouty family. Forms heterodimers with SPRY1. Forms a tripartite complex containing GAB1, METTL13 and SPRY2. Within the complex interacts with METTL13. Interacts with RAF1. Interacts (via C-terminus) with TESK1 (via C-terminus); the interaction disrupts SPRY2 interaction with GRB2, potentially via disruption of SPRY2 serine dephosphorylation. Interacts with PPP2R1A/PP2A-A and PPP2CA/PP2A-C; the interaction with PPP2CA/PP2A-C is inhibited by interaction with TESK1, possibly by vesicular sequestration of SPRY2. Inhibition of the interaction with the serine/threonine-protein phosphatase 2A (PP2A) holoenzyme results in loss of PP2A-mediated dephosphorylation, resulting in the loss of SPRY2 interaction with GRB2. Interacts with GRB2. Interacts with CBL/C-CBL; the interaction inhibits CBL-mediated ubiquitination of EGFR. Interacts (via C-terminus) with CAV1 (via C-terminus). Cleaved at Pro-144 by the prolyl endopeptidase FAP (seprase) activity (in vitro).

It is found in the cytoplasm. It localises to the cytoskeleton. Its subcellular location is the cell projection. The protein resides in the ruffle membrane. In terms of biological role, antagonist of fibroblast growth factor (FGF) pathways via inhibition of FGF-mediated phosphorylation of ERK1/2. Thereby acts as an antagonist of FGF-induced retinal lens fiber differentiation, may inhibit limb bud outgrowth and may negatively modulate respiratory organogenesis. Inhibits TGFB-induced epithelial-to-mesenchymal transition in retinal lens epithelial cells. Inhibits CBL/C-CBL-mediated EGFR ubiquitination. This Bos taurus (Bovine) protein is Protein sprouty homolog 2 (SPRY2).